Here is a 599-residue protein sequence, read N- to C-terminus: Microtubule-associated protein 70-2 (599 aa).

A disordered region spans residues 1 to 30 (MADGGGGEEGSASALRGSARRRGAVQPAGL). Residues 43-349 (DPVKVELNRL…ARSEAQLKEK (307 aa)) are a coiled coil. Residues 227–460 (ILDRLHRQKV…HLLNRSTDAV (234 aa)) form a required for targeting to microtubules region. Disordered regions lie at residues 357–453 (LEDG…PHLL) and 557–599 (AMRL…RNLQ). Residues 404–420 (RRSPSFNSRSSLSTSSS) show a composition bias toward low complexity. Residues 533–570 (LTKAMEVEAKKMRREVAAMEKEVAAMRLDKDQENKAKR) adopt a coiled-coil conformation. Over residues 557–568 (AMRLDKDQENKA) the composition is skewed to basic and acidic residues.

This sequence belongs to the MAP70 family.

The protein localises to the cytoplasm. It is found in the cytoskeleton. In terms of biological role, plant-specific protein that interact with microtubules. The chain is Microtubule-associated protein 70-2 (MAP70.2) from Oryza sativa subsp. japonica (Rice).